The primary structure comprises 410 residues: Putative ribonuclease E (410 aa).

The region spanning 39-119 (SNIYKGKIVR…GTKGALLTTF (81 aa)) is the S1 motif domain. Positions 303 and 346 each coordinate Mg(2+).

The protein belongs to the RNase E/G family. RNase E subfamily. In terms of assembly, component of the RNA degradosome, which is a multiprotein complex involved in RNA processing and mRNA degradation. Within the RNA degradosome, RNase E assembles into a homotetramer formed by a dimer of dimers. Mg(2+) serves as cofactor.

It localises to the cytoplasm. It is found in the cell inner membrane. The enzyme catalyses Endonucleolytic cleavage of single-stranded RNA in A- and U-rich regions.. Its function is as follows. Endoribonuclease that plays a central role in RNA processing and decay. Required for the maturation of 5S and 16S rRNAs and the majority of tRNAs. Also involved in the degradation of most mRNAs. In Buchnera aphidicola subsp. Baizongia pistaciae (strain Bp), this protein is Putative ribonuclease E (rne).